The sequence spans 143 residues: Transcriptional regulator MraZ (143 aa).

SpoVT-AbrB domains lie at 5-47 (EYEH…PMPV) and 76-119 (ASDL…SAER).

Belongs to the MraZ family. Forms oligomers.

It is found in the cytoplasm. It localises to the nucleoid. The protein is Transcriptional regulator MraZ of Herpetosiphon aurantiacus (strain ATCC 23779 / DSM 785 / 114-95).